A 185-amino-acid chain; its full sequence is Elongation factor P (185 aa).

This sequence belongs to the elongation factor P family.

Its subcellular location is the cytoplasm. It participates in protein biosynthesis; polypeptide chain elongation. Functionally, involved in peptide bond synthesis. Stimulates efficient translation and peptide-bond synthesis on native or reconstituted 70S ribosomes in vitro. Probably functions indirectly by altering the affinity of the ribosome for aminoacyl-tRNA, thus increasing their reactivity as acceptors for peptidyl transferase. The sequence is that of Elongation factor P from Gloeothece citriformis (strain PCC 7424) (Cyanothece sp. (strain PCC 7424)).